Here is a 261-residue protein sequence, read N- to C-terminus: Cytochrome c oxidase subunit 3 (261 aa).

Over 1-15 (MTHQTHAYHMVDPSP) the chain is Mitochondrial matrix. Residues 16–34 (WPLTGALSALLMTSGLTMW) form a helical membrane-spanning segment. The Mitochondrial intermembrane portion of the chain corresponds to 35–40 (FHYHSV). A helical membrane pass occupies residues 41–66 (TLLLLGLTTNILTMFQWWRDVVREGT). Residues 67–72 (FQGHHT) are Mitochondrial matrix-facing. A helical transmembrane segment spans residues 73–105 (PVVQESLRYGMILFITSEVLFFTGFFWAFYHSS). Residues 106-128 (LAPTPELGSYWPPVGVYPLNPLE) are Mitochondrial intermembrane-facing. A helical transmembrane segment spans residues 129 to 152 (VPLLNTSVLLASGVTITWAHHSLM). Residues 153–155 (EGN) lie on the Mitochondrial matrix side of the membrane. Residues 156 to 183 (RKNMLQALLITILLGVYFTLLQMFEYYE) form a helical membrane-spanning segment. Topologically, residues 184-190 (ASFTISD) are mitochondrial intermembrane. The chain crosses the membrane as a helical span at residues 191–223 (GIYGSTFFVTTGFHGLHVIIGSTFLLTCFIRQL). Residues 224-232 (KFHFTSNHH) lie on the Mitochondrial matrix side of the membrane. The helical transmembrane segment at 233–256 (FGFEAAAWYWHFVDVVWLFLYLSI) threads the bilayer. Topologically, residues 257–261 (YWWGS) are mitochondrial intermembrane.

The protein belongs to the cytochrome c oxidase subunit 3 family. In terms of assembly, component of the cytochrome c oxidase (complex IV, CIV), a multisubunit enzyme composed of 14 subunits. The complex is composed of a catalytic core of 3 subunits MT-CO1, MT-CO2 and MT-CO3, encoded in the mitochondrial DNA, and 11 supernumerary subunits COX4I, COX5A, COX5B, COX6A, COX6B, COX6C, COX7A, COX7B, COX7C, COX8 and NDUFA4, which are encoded in the nuclear genome. The complex exists as a monomer or a dimer and forms supercomplexes (SCs) in the inner mitochondrial membrane with NADH-ubiquinone oxidoreductase (complex I, CI) and ubiquinol-cytochrome c oxidoreductase (cytochrome b-c1 complex, complex III, CIII), resulting in different assemblies (supercomplex SCI(1)III(2)IV(1) and megacomplex MCI(2)III(2)IV(2)).

It localises to the mitochondrion inner membrane. It catalyses the reaction 4 Fe(II)-[cytochrome c] + O2 + 8 H(+)(in) = 4 Fe(III)-[cytochrome c] + 2 H2O + 4 H(+)(out). In terms of biological role, component of the cytochrome c oxidase, the last enzyme in the mitochondrial electron transport chain which drives oxidative phosphorylation. The respiratory chain contains 3 multisubunit complexes succinate dehydrogenase (complex II, CII), ubiquinol-cytochrome c oxidoreductase (cytochrome b-c1 complex, complex III, CIII) and cytochrome c oxidase (complex IV, CIV), that cooperate to transfer electrons derived from NADH and succinate to molecular oxygen, creating an electrochemical gradient over the inner membrane that drives transmembrane transport and the ATP synthase. Cytochrome c oxidase is the component of the respiratory chain that catalyzes the reduction of oxygen to water. Electrons originating from reduced cytochrome c in the intermembrane space (IMS) are transferred via the dinuclear copper A center (CU(A)) of subunit 2 and heme A of subunit 1 to the active site in subunit 1, a binuclear center (BNC) formed by heme A3 and copper B (CU(B)). The BNC reduces molecular oxygen to 2 water molecules using 4 electrons from cytochrome c in the IMS and 4 protons from the mitochondrial matrix. The sequence is that of Cytochrome c oxidase subunit 3 (MT-CO3) from Loxodonta africana (African elephant).